The chain runs to 34 residues: Sarcoplasmic/endoplasmic reticulum calcium ATPase regulator DWORF (34 aa).

A helical membrane pass occupies residues 12–32 (IVPILLLVGWIVGCIIVIYIV).

In terms of assembly, homooligomer. Can also form heterooligomers with other sarcoplasmic/endoplasmic reticulum calcium ATPase (SERCA) regulators ARLN, ERLN, PLN and SLN. Monomer. Interacts with ATP2A1/SERCA1; the interaction results in activation of ATP2A1. Interacts as a monomer with ATP2A2/SERCA2; the interaction results in activation of ATP2A2. In terms of tissue distribution, highly expressed in heart (at protein level). Detected in heart and soleus, a postural muscle group of the hindlimb containing the highest enrichment of slow-twitch muscle fibers. Also expressed in diaphragm, which contains some slow-twitch fibers. Not detected in the quadriceps, a fast-twitch muscle group, or in cardiac atrial muscle. Not expressed in the prenatal heart but gradually increases in abundance postnatally.

The protein localises to the sarcoplasmic reticulum membrane. Enhances the activity of ATP2A1/SERCA1 ATPase in sarcoplasmic reticulum by displacing ATP2A1/SERCA1 inhibitors, thereby acting as a key regulator of skeletal muscle activity. Also enhances the activity of the ATP2A2/SERCA2 ATPase. Does not directly stimulate SERCA pump activity. Binds preferentially to the phosphorylated E1 and E2 conformational forms of ATP2A2 which predominate at high Ca(2+) concentrations during the systolic phase of the cardiac cycle. Competes with ATP2A2 inhibitor phospholamban (PLN) for binding to ATP2A2 and displaces PLN. Can activate ATP2A2 directly in the absence of PLN. Also enhances sarcoplasmic reticulum Ca(2+) uptake and myocyte contractility by displacing the SERCA inhibitory peptides sarcolipin (SLN) and myoregulin (MRLN). This chain is Sarcoplasmic/endoplasmic reticulum calcium ATPase regulator DWORF, found in Mus musculus (Mouse).